Here is a 197-residue protein sequence, read N- to C-terminus: Imidazoleglycerol-phosphate dehydratase (197 aa).

Belongs to the imidazoleglycerol-phosphate dehydratase family.

Its subcellular location is the cytoplasm. It catalyses the reaction D-erythro-1-(imidazol-4-yl)glycerol 3-phosphate = 3-(imidazol-4-yl)-2-oxopropyl phosphate + H2O. The protein operates within amino-acid biosynthesis; L-histidine biosynthesis; L-histidine from 5-phospho-alpha-D-ribose 1-diphosphate: step 6/9. This is Imidazoleglycerol-phosphate dehydratase from Pseudomonas putida (strain W619).